We begin with the raw amino-acid sequence, 1150 residues long: ATP-dependent helicase/deoxyribonuclease subunit B (1150 aa).

8 to 15 is a binding site for ATP; sequence GRAGSGKS. 4 residues coordinate [4Fe-4S] cluster: Cys-786, Cys-1106, Cys-1109, and Cys-1115.

The protein belongs to the helicase family. AddB/RexB type 1 subfamily. Heterodimer of AddA and AddB. Mg(2+) is required as a cofactor. Requires [4Fe-4S] cluster as cofactor.

The heterodimer acts as both an ATP-dependent DNA helicase and an ATP-dependent, dual-direction single-stranded exonuclease. Recognizes the chi site generating a DNA molecule suitable for the initiation of homologous recombination. The AddB subunit has 5' -&gt; 3' nuclease activity but not helicase activity. This is ATP-dependent helicase/deoxyribonuclease subunit B from Clostridium botulinum (strain Okra / Type B1).